Consider the following 205-residue polypeptide: MDAIVKNFPVLDDTSGRPTQKEAEEAVRVLLRWAGEDPAREGLKDTPARVAKAYREIFGGYDLAAEDVLGRTFEEVSGYDDIVLEKDIPFYSHCEHHMVPIIGKAHIAYLPNGRVLGLSKIARVVDIYARRLQTQEAMTAQIARAIDETLVPRGVAVMIEAEHLCMAMRGIKKQGATTMTTTFTGEFKSEPAEQVRFMTMLRGFK.

Positions 94, 97, and 165 each coordinate Zn(2+).

This sequence belongs to the GTP cyclohydrolase I family. Toroid-shaped homodecamer, composed of two pentamers of five dimers.

It carries out the reaction GTP + H2O = 7,8-dihydroneopterin 3'-triphosphate + formate + H(+). It functions in the pathway cofactor biosynthesis; 7,8-dihydroneopterin triphosphate biosynthesis; 7,8-dihydroneopterin triphosphate from GTP: step 1/1. The chain is GTP cyclohydrolase 1 from Sinorhizobium medicae (strain WSM419) (Ensifer medicae).